We begin with the raw amino-acid sequence, 231 residues long: UPF0653 protein C607.02c (231 aa).

Disordered stretches follow at residues 1-33, 47-68, 93-132, and 147-178; these read MPTK…VDDN, YHES…KKDY, SFKS…ENFE, and IESR…APPE. A compositionally biased stretch (basic and acidic residues) spans 9-27; sequence SVLEAERKKIGLDHAPKED. Basic residues-rich tracts occupy residues 53–67 and 109–119; these read KEIK…KKKD and EKKKIAKRKEK.

This sequence belongs to the UPF0653 family.

It is found in the nucleus. It localises to the nucleolus. This Schizosaccharomyces pombe (strain 972 / ATCC 24843) (Fission yeast) protein is UPF0653 protein C607.02c.